The following is a 151-amino-acid chain: MKVWVDADACPGVIKEILFRVADRAKVEVTLVANHWMRIPPSPYINLKTVSSGFDVADDEIVKLLSAGDLVITADIPLASEVIDKGGFALNPRGELYTEQNIKSILNMRDFMDTMRASGVQTGGPAAIGASEKQAFGNQLDRFITKNHKPS.

The protein belongs to the UPF0178 family.

This chain is UPF0178 protein Spea_2958, found in Shewanella pealeana (strain ATCC 700345 / ANG-SQ1).